Reading from the N-terminus, the 140-residue chain is Nucleoside diphosphate kinase (140 aa).

Residues Lys11, Phe59, Arg87, Thr93, Arg104, and Asn114 each coordinate ATP. His117 (pros-phosphohistidine intermediate) is an active-site residue.

This sequence belongs to the NDK family. Homotetramer. Mg(2+) serves as cofactor.

It is found in the cytoplasm. The enzyme catalyses a 2'-deoxyribonucleoside 5'-diphosphate + ATP = a 2'-deoxyribonucleoside 5'-triphosphate + ADP. It catalyses the reaction a ribonucleoside 5'-diphosphate + ATP = a ribonucleoside 5'-triphosphate + ADP. Functionally, major role in the synthesis of nucleoside triphosphates other than ATP. The ATP gamma phosphate is transferred to the NDP beta phosphate via a ping-pong mechanism, using a phosphorylated active-site intermediate. The sequence is that of Nucleoside diphosphate kinase from Persephonella marina (strain DSM 14350 / EX-H1).